The chain runs to 288 residues: Probable endonuclease 4 (288 aa).

9 residues coordinate Zn(2+): His-75, His-115, Glu-153, Asp-187, His-190, His-224, Asp-237, His-239, and Glu-269.

Belongs to the AP endonuclease 2 family. Zn(2+) serves as cofactor.

The enzyme catalyses Endonucleolytic cleavage to 5'-phosphooligonucleotide end-products.. Functionally, endonuclease IV plays a role in DNA repair. It cleaves phosphodiester bonds at apurinic or apyrimidinic (AP) sites, generating a 3'-hydroxyl group and a 5'-terminal sugar phosphate. In Chlamydia muridarum (strain MoPn / Nigg), this protein is Probable endonuclease 4.